The sequence spans 339 residues: MVTYSESGVDIDLEAVTVSKLASKLKSTLEYRDIITDSGHYAALVRLGDKAIAMSTDGVGSKILIAEMMNKYDTVGIDCIAMVVNDILCVGAEPIALVDYLAVEQPDPERAEEIAEGLVTGAKESRISIIGGETASLPGIIKDFDLAGTGIGFVDVDKIITGEDIEAGDVLIGIESNGIHSNGYSLARKALFDDAGFSIDDKMPNCDTTIGEELIRPTELYVKPIVALFKEEYDIHGLAHITGGGFTNLRRLKKGVGYDIYDLPEAPEIFKLIYQQNVPLEEMYKVFNMGIGFVVITNENEAEKIMETLKDYCNCQIIGKVTDDEKITVKTFEGSEVTY.

It belongs to the AIR synthase family.

Its subcellular location is the cytoplasm. The enzyme catalyses 2-formamido-N(1)-(5-O-phospho-beta-D-ribosyl)acetamidine + ATP = 5-amino-1-(5-phospho-beta-D-ribosyl)imidazole + ADP + phosphate + H(+). The protein operates within purine metabolism; IMP biosynthesis via de novo pathway; 5-amino-1-(5-phospho-D-ribosyl)imidazole from N(2)-formyl-N(1)-(5-phospho-D-ribosyl)glycinamide: step 2/2. The protein is Phosphoribosylformylglycinamidine cyclo-ligase of Methanobrevibacter smithii (strain ATCC 35061 / DSM 861 / OCM 144 / PS).